Reading from the N-terminus, the 157-residue chain is Protein Smg (157 aa).

Belongs to the Smg family.

The chain is Protein Smg from Enterobacter sp. (strain 638).